The primary structure comprises 462 residues: L-seryl-tRNA(Sec) selenium transferase (462 aa).

Lys-292 bears the N6-(pyridoxal phosphate)lysine mark.

It belongs to the SelA family. Requires pyridoxal 5'-phosphate as cofactor.

The protein resides in the cytoplasm. The enzyme catalyses L-seryl-tRNA(Sec) + selenophosphate + H(+) = L-selenocysteinyl-tRNA(Sec) + phosphate. Its pathway is aminoacyl-tRNA biosynthesis; selenocysteinyl-tRNA(Sec) biosynthesis; selenocysteinyl-tRNA(Sec) from L-seryl-tRNA(Sec) (bacterial route): step 1/1. Its function is as follows. Converts seryl-tRNA(Sec) to selenocysteinyl-tRNA(Sec) required for selenoprotein biosynthesis. The sequence is that of L-seryl-tRNA(Sec) selenium transferase from Geotalea uraniireducens (strain Rf4) (Geobacter uraniireducens).